The sequence spans 303 residues: Aspartate carbamoyltransferase catalytic subunit (303 aa).

Residues Arg51 and Thr52 each coordinate carbamoyl phosphate. Lys80 serves as a coordination point for L-aspartate. 3 residues coordinate carbamoyl phosphate: Arg101, His129, and Gln132. Arg162 and Arg221 together coordinate L-aspartate. Positions 260 and 261 each coordinate carbamoyl phosphate.

Belongs to the aspartate/ornithine carbamoyltransferase superfamily. ATCase family. In terms of assembly, heterooligomer of catalytic and regulatory chains.

The catalysed reaction is carbamoyl phosphate + L-aspartate = N-carbamoyl-L-aspartate + phosphate + H(+). The protein operates within pyrimidine metabolism; UMP biosynthesis via de novo pathway; (S)-dihydroorotate from bicarbonate: step 2/3. In terms of biological role, catalyzes the condensation of carbamoyl phosphate and aspartate to form carbamoyl aspartate and inorganic phosphate, the committed step in the de novo pyrimidine nucleotide biosynthesis pathway. The chain is Aspartate carbamoyltransferase catalytic subunit from Saccharolobus islandicus (strain M.16.27) (Sulfolobus islandicus).